The chain runs to 233 residues: Large ribosomal subunit protein uL1 (233 aa).

It belongs to the universal ribosomal protein uL1 family. Part of the 50S ribosomal subunit.

Functionally, binds directly to 23S rRNA. The L1 stalk is quite mobile in the ribosome, and is involved in E site tRNA release. Protein L1 is also a translational repressor protein, it controls the translation of the L11 operon by binding to its mRNA. The chain is Large ribosomal subunit protein uL1 from Brucella melitensis biotype 1 (strain ATCC 23456 / CCUG 17765 / NCTC 10094 / 16M).